The chain runs to 310 residues: ADP-L-glycero-D-manno-heptose-6-epimerase (310 aa).

NADP(+) is bound by residues 10 to 11 (FI), 31 to 32 (DN), Lys38, Lys53, 75 to 79 (EGACS), and Asn92. Tyr140 (proton acceptor) is an active-site residue. Position 144 (Lys144) interacts with NADP(+). Asn169 lines the substrate pocket. NADP(+)-binding residues include Val170 and Lys178. Lys178 serves as the catalytic Proton acceptor. Residues Ser180, His187, 201-204 (FEGS), Arg209, and Tyr272 contribute to the substrate site.

Belongs to the NAD(P)-dependent epimerase/dehydratase family. HldD subfamily. Homopentamer. Requires NADP(+) as cofactor.

It carries out the reaction ADP-D-glycero-beta-D-manno-heptose = ADP-L-glycero-beta-D-manno-heptose. It participates in nucleotide-sugar biosynthesis; ADP-L-glycero-beta-D-manno-heptose biosynthesis; ADP-L-glycero-beta-D-manno-heptose from D-glycero-beta-D-manno-heptose 7-phosphate: step 4/4. Its function is as follows. Catalyzes the interconversion between ADP-D-glycero-beta-D-manno-heptose and ADP-L-glycero-beta-D-manno-heptose via an epimerization at carbon 6 of the heptose. The sequence is that of ADP-L-glycero-D-manno-heptose-6-epimerase from Klebsiella pneumoniae (strain 342).